Consider the following 550-residue polypeptide: GMP synthase [glutamine-hydrolyzing] (550 aa).

Positions 39–232 (RILILDFGSQ…VHKICGCGGL (194 aa)) constitute a Glutamine amidotransferase type-1 domain. Cys116 acts as the Nucleophile in catalysis. Active-site residues include His206 and Glu208. In terms of domain architecture, GMPS ATP-PPase spans 233–425 (WTPEHIIDLR…LGLPHSMIYR (193 aa)). Residue 260-266 (SGGVDSS) coordinates ATP.

In terms of assembly, homodimer.

The enzyme catalyses XMP + L-glutamine + ATP + H2O = GMP + L-glutamate + AMP + diphosphate + 2 H(+). Its pathway is purine metabolism; GMP biosynthesis; GMP from XMP (L-Gln route): step 1/1. Catalyzes the synthesis of GMP from XMP. In Acinetobacter baylyi (strain ATCC 33305 / BD413 / ADP1), this protein is GMP synthase [glutamine-hydrolyzing].